We begin with the raw amino-acid sequence, 415 residues long: Esterase FrsA (415 aa).

The protein belongs to the FrsA family.

The catalysed reaction is a carboxylic ester + H2O = an alcohol + a carboxylate + H(+). Catalyzes the hydrolysis of esters. This Yersinia enterocolitica serotype O:8 / biotype 1B (strain NCTC 13174 / 8081) protein is Esterase FrsA.